Here is a 249-residue protein sequence, read N- to C-terminus: Ubiquinone biosynthesis O-methyltransferase (249 aa).

The tract at residues 1–21 (MIPEVSNEASQPAAHRQENVD) is disordered. Residues Arg52, Gly72, Asp93, and Met137 each contribute to the S-adenosyl-L-methionine site.

This sequence belongs to the methyltransferase superfamily. UbiG/COQ3 family.

The catalysed reaction is a 3-demethylubiquinol + S-adenosyl-L-methionine = a ubiquinol + S-adenosyl-L-homocysteine + H(+). It catalyses the reaction a 3-(all-trans-polyprenyl)benzene-1,2-diol + S-adenosyl-L-methionine = a 2-methoxy-6-(all-trans-polyprenyl)phenol + S-adenosyl-L-homocysteine + H(+). Its pathway is cofactor biosynthesis; ubiquinone biosynthesis. Functionally, O-methyltransferase that catalyzes the 2 O-methylation steps in the ubiquinone biosynthetic pathway. The polypeptide is Ubiquinone biosynthesis O-methyltransferase (Sodalis glossinidius (strain morsitans)).